A 231-amino-acid chain; its full sequence is Uracil-DNA glycosylase (231 aa).

Aspartate 74 (proton acceptor) is an active-site residue.

The protein belongs to the uracil-DNA glycosylase (UDG) superfamily. UNG family.

It is found in the cytoplasm. The catalysed reaction is Hydrolyzes single-stranded DNA or mismatched double-stranded DNA and polynucleotides, releasing free uracil.. In terms of biological role, excises uracil residues from the DNA which can arise as a result of misincorporation of dUMP residues by DNA polymerase or due to deamination of cytosine. The sequence is that of Uracil-DNA glycosylase from Campylobacter jejuni subsp. jejuni serotype O:6 (strain 81116 / NCTC 11828).